A 339-amino-acid polypeptide reads, in one-letter code: Beta-ketoacyl-[acyl-carrier-protein] synthase III (339 aa).

Catalysis depends on residues cysteine 119 and histidine 262. Residues 263-267 (QANQR) form an ACP-binding region. The active site involves asparagine 292.

It belongs to the thiolase-like superfamily. FabH family. In terms of assembly, homodimer.

The protein resides in the cytoplasm. The catalysed reaction is malonyl-[ACP] + acetyl-CoA + H(+) = 3-oxobutanoyl-[ACP] + CO2 + CoA. It participates in lipid metabolism; fatty acid biosynthesis. Catalyzes the condensation reaction of fatty acid synthesis by the addition to an acyl acceptor of two carbons from malonyl-ACP. Catalyzes the first condensation reaction which initiates fatty acid synthesis and may therefore play a role in governing the total rate of fatty acid production. Possesses both acetoacetyl-ACP synthase and acetyl transacylase activities. Its substrate specificity determines the biosynthesis of branched-chain and/or straight-chain of fatty acids. This Prochlorococcus marinus (strain MIT 9313) protein is Beta-ketoacyl-[acyl-carrier-protein] synthase III.